We begin with the raw amino-acid sequence, 243 residues long: UPF0758 protein AM1_4368 (243 aa).

Residues 113–235 enclose the MPN domain; that stretch reads VIDDPAVAAA…FTSLRQTTSL (123 aa). Zn(2+) contacts are provided by H184, H186, and D197. A JAMM motif motif is present at residues 184 to 197; sequence HNHPSGQTDPSPED.

It belongs to the UPF0758 family.

The sequence is that of UPF0758 protein AM1_4368 from Acaryochloris marina (strain MBIC 11017).